A 619-amino-acid polypeptide reads, in one-letter code: Zinc finger CCCH domain-containing protein 67 (619 aa).

ANK repeat units lie at residues glutamate 52–proline 81 and serine 88–leucine 120. 2 consecutive C3H1-type zinc fingers follow at residues histidine 213–phenylalanine 241 and glutamine 249–aspartate 273. Positions serine 308–glutamine 341 are disordered. Gly residues predominate over residues alanine 322–alanine 337.

The protein is Zinc finger CCCH domain-containing protein 67 of Oryza sativa subsp. japonica (Rice).